Reading from the N-terminus, the 528-residue chain is Nucleolar GTP-binding protein 1 (528 aa).

In terms of domain architecture, OBG-type G spans 168-335; that stretch reads RTLLVCGFPN…VKAMACDLLL (168 aa). Residues 174–181, 220–224, and 287–290 each bind GTP; these read GFPNVGKS, DTPGI, and SKSD. The disordered stretch occupies residues 470–528; that stretch reads PDSWKHRSRNSGGDIAVHVRRDSKTQVAQPPRLPSKKKARFDDKHYYDRKPKHLYRGRK. Basic and acidic residues predominate over residues 509–518; the sequence is RFDDKHYYDR. Residues 519 to 528 show a composition bias toward basic residues; it reads KPKHLYRGRK.

Belongs to the TRAFAC class OBG-HflX-like GTPase superfamily. OBG GTPase family. NOG subfamily.

It localises to the nucleus. The protein resides in the nucleolus. Its function is as follows. Involved in the biogenesis of the 60S ribosomal subunit. The protein is Nucleolar GTP-binding protein 1 (NOG1) of Encephalitozoon cuniculi (strain GB-M1) (Microsporidian parasite).